Here is a 262-residue protein sequence, read N- to C-terminus: 1-(5-phosphoribosyl)-5-[(5-phosphoribosylamino)methylideneamino] imidazole-4-carboxamide isomerase (262 aa).

Asp-8 serves as the catalytic Proton acceptor. Residue Asp-129 is the Proton donor of the active site. The tract at residues 243-262 (KDNVGQEDHSLPRCEPGPRG) is disordered.

It belongs to the HisA/HisF family.

It is found in the cytoplasm. The catalysed reaction is 1-(5-phospho-beta-D-ribosyl)-5-[(5-phospho-beta-D-ribosylamino)methylideneamino]imidazole-4-carboxamide = 5-[(5-phospho-1-deoxy-D-ribulos-1-ylimino)methylamino]-1-(5-phospho-beta-D-ribosyl)imidazole-4-carboxamide. It participates in amino-acid biosynthesis; L-histidine biosynthesis; L-histidine from 5-phospho-alpha-D-ribose 1-diphosphate: step 4/9. This chain is 1-(5-phosphoribosyl)-5-[(5-phosphoribosylamino)methylideneamino] imidazole-4-carboxamide isomerase, found in Desulforudis audaxviator (strain MP104C).